The chain runs to 517 residues: Cytochrome b mRNA maturase bI3 (517 aa).

Topologically, residues 1–31 (MAFRKSNVYLSLVNSYIIDSPQPSSINYWWN) are mitochondrial matrix. The cytochrome b stretch occupies residues 1–169 (MAFRKSNVYL…DIVSWLWGGF (169 aa)). A helical transmembrane segment spans residues 32 to 52 (MGSLLGLCLVIQIVTGIFMAM). Over 53 to 84 (HYSSNIELAFSSVEHIMRDVHNGYILRYLHAN) the chain is Mitochondrial intermembrane. A helical transmembrane segment spans residues 85 to 105 (GASFFFMVMFMHMAKGLYYGS). Residues 106-115 (YRSPRVTLWN) are Mitochondrial matrix-facing. Residues 116-136 (VGVIIFILTIATAFLGYCCVY) traverse the membrane as a helical segment. At 137–145 (GQMSHWGAT) the chain is on the mitochondrial intermembrane side. Residues 146–166 (VITNLFSAIPFVGNDIVSWLW) traverse the membrane as a helical segment. Over 167–184 (GGFNMEDPYYSNMMLNKS) the chain is Mitochondrial matrix. Residues 170-517 (NMEDPYYSNM…NNYFKIPPKY (348 aa)) are maturase. The helical transmembrane segment at 185–205 (VLCWNIFIWMMNYYIIQLIIY) threads the bilayer. The Mitochondrial intermembrane portion of the chain corresponds to 206 to 224 (NNMIWNKNNMVKMFIMRRK). A helical transmembrane segment spans residues 225–242 (LAVINMYMYMKLIIQRTY). Residues 243-517 (SYYMNNTIIY…NNYFKIPPKY (275 aa)) are Mitochondrial matrix-facing.

It in the N-terminal section; belongs to the cytochrome b family. The protein in the C-terminal section; belongs to the LAGLIDADG endonuclease family. As to quaternary structure, forms a ribonucleoprotein complex composed of maturase bI3 and 2 dimers of MRS1 that assemble around the bI3 RNA.

It localises to the mitochondrion inner membrane. Mitochondrial mRNA maturase required for splicing of intron 3 of the cytochrome b (COB) gene, containing its own coding sequence. In vivo splicing requires the formation of a ribonucleoprotein complex together with the imported mitochondrial RNA-splicing protein MRS1. The complex seems to stimulate the intrinsic ribozyme activity of intron bI3 through binding to and stabilizing specific secondary and tertiary structure elements in the RNA. The sequence is that of Cytochrome b mRNA maturase bI3 (BI3) from Saccharomyces cerevisiae (strain ATCC 204508 / S288c) (Baker's yeast).